The following is a 417-amino-acid chain: RH-like protein IC (417 aa).

The next 11 helical transmembrane spans lie at 12–32 (CLPL…YFFT), 44–64 (LVAS…GFGF), 77–97 (VAFN…LDGF), 125–145 (ISAG…MVLV), 172–192 (FYVF…KPLP), 203–223 (TIPS…WPSF), 238–258 (VFNT…VSSL), 265–285 (INMT…GTSC), 287–307 (LITS…ISIG), 331–351 (NFSL…VLHT), and 358–378 (MVGF…AIAV).

This sequence belongs to the ammonium transporter (TC 2.A.49) family. Rh subfamily.

The protein resides in the membrane. Its function is as follows. May be part of an oligomeric complex which is likely to have a transport or channel function in the erythrocyte membrane. This chain is RH-like protein IC, found in Gorilla gorilla gorilla (Western lowland gorilla).